A 368-amino-acid chain; its full sequence is Type 2 DNA topoisomerase 6 subunit A (368 aa).

The region spanning 9–148 (PDTEEAREQL…FHMRPEESGA (140 aa)) is the Topo IIA-type catalytic domain. Tyr103 acts as the O-(5'-phospho-DNA)-tyrosine intermediate in catalysis. 2 residues coordinate Mg(2+): Glu201 and Asp253.

Belongs to the TOP6A family. As to quaternary structure, homodimer. Heterotetramer of two Top6A and two Top6B chains. It depends on Mg(2+) as a cofactor.

It carries out the reaction ATP-dependent breakage, passage and rejoining of double-stranded DNA.. Relaxes both positive and negative superturns and exhibits a strong decatenase activity. The polypeptide is Type 2 DNA topoisomerase 6 subunit A (Haloarcula marismortui (strain ATCC 43049 / DSM 3752 / JCM 8966 / VKM B-1809) (Halobacterium marismortui)).